The following is a 468-amino-acid chain: UDP-N-acetylmuramate--L-alanine ligase (468 aa).

An ATP-binding site is contributed by 112-118; the sequence is GTHGKTT.

This sequence belongs to the MurCDEF family.

Its subcellular location is the cytoplasm. It catalyses the reaction UDP-N-acetyl-alpha-D-muramate + L-alanine + ATP = UDP-N-acetyl-alpha-D-muramoyl-L-alanine + ADP + phosphate + H(+). The protein operates within cell wall biogenesis; peptidoglycan biosynthesis. Its function is as follows. Cell wall formation. The polypeptide is UDP-N-acetylmuramate--L-alanine ligase (Bordetella avium (strain 197N)).